The following is a 131-amino-acid chain: Small ribosomal subunit protein uS8 (131 aa).

It belongs to the universal ribosomal protein uS8 family. In terms of assembly, part of the 30S ribosomal subunit. Contacts proteins S5 and S12.

Its function is as follows. One of the primary rRNA binding proteins, it binds directly to 16S rRNA central domain where it helps coordinate assembly of the platform of the 30S subunit. This is Small ribosomal subunit protein uS8 from Clostridium novyi (strain NT).